The primary structure comprises 53 residues: uncharacterized protein (53 aa).

A helical membrane pass occupies residues 28–45 (AIVFSLAVFGIVEAYYYW).

The protein resides in the host membrane. This is an uncharacterized protein from Acidianus convivator (ABV).